The sequence spans 294 residues: Proline iminopeptidase (294 aa).

The region spanning 27 to 277 (PPLVLLHGGP…GCGHMSFVEK (251 aa)) is the AB hydrolase-1 domain. The active-site Nucleophile is Ser105. The active site involves Asp244. His271 acts as the Proton donor in catalysis.

It belongs to the peptidase S33 family.

The protein resides in the cell envelope. It carries out the reaction Release of N-terminal proline from a peptide.. Releases the N-terminal proline from various substrates. The polypeptide is Proline iminopeptidase (Lactobacillus helveticus (strain DPC 4571)).